Here is a 253-residue protein sequence, read N- to C-terminus: Phosphonates import ATP-binding protein PhnC (253 aa).

The region spanning Val-4–Gly-247 is the ABC transporter domain. An ATP-binding site is contributed by Gly-36–Ser-43.

Belongs to the ABC transporter superfamily. Phosphonates importer (TC 3.A.1.9.1) family. As to quaternary structure, the complex is composed of two ATP-binding proteins (PhnC), two transmembrane proteins (PhnE) and a solute-binding protein (PhnD).

The protein resides in the cell membrane. The catalysed reaction is phosphonate(out) + ATP + H2O = phosphonate(in) + ADP + phosphate + H(+). Its function is as follows. Part of the ABC transporter complex PhnCDE involved in phosphonates import. Responsible for energy coupling to the transport system. This chain is Phosphonates import ATP-binding protein PhnC, found in Frankia casuarinae (strain DSM 45818 / CECT 9043 / HFP020203 / CcI3).